A 377-amino-acid polypeptide reads, in one-letter code: N-acetyldiaminopimelate deacetylase (377 aa).

Residue D69 is part of the active site. Residue E128 is the Proton acceptor of the active site.

The protein belongs to the peptidase M20A family. N-acetyldiaminopimelate deacetylase subfamily.

The enzyme catalyses N-acetyl-(2S,6S)-2,6-diaminopimelate + H2O = (2S,6S)-2,6-diaminopimelate + acetate. The protein operates within amino-acid biosynthesis; L-lysine biosynthesis via DAP pathway; LL-2,6-diaminopimelate from (S)-tetrahydrodipicolinate (acetylase route): step 3/3. Its function is as follows. Catalyzes the conversion of N-acetyl-diaminopimelate to diaminopimelate and acetate. This is N-acetyldiaminopimelate deacetylase from Brevibacillus brevis (strain 47 / JCM 6285 / NBRC 100599).